A 201-amino-acid chain; its full sequence is Dephospho-CoA kinase (201 aa).

The DPCK domain occupies 10 to 201 (LIGLTGGIAT…PQIIKAWHHR (192 aa)). An ATP-binding site is contributed by 18–23 (ATGKST).

This sequence belongs to the CoaE family.

The protein localises to the cytoplasm. It carries out the reaction 3'-dephospho-CoA + ATP = ADP + CoA + H(+). It participates in cofactor biosynthesis; coenzyme A biosynthesis; CoA from (R)-pantothenate: step 5/5. Functionally, catalyzes the phosphorylation of the 3'-hydroxyl group of dephosphocoenzyme A to form coenzyme A. This chain is Dephospho-CoA kinase, found in Synechocystis sp. (strain ATCC 27184 / PCC 6803 / Kazusa).